Here is a 542-residue protein sequence, read N- to C-terminus: Nibrin homolog (542 aa).

The region spanning 25–90 (YKVGRKGCDI…YGTFVKTDLG (66 aa)) is the FHA domain. The region spanning 119–195 (IYRLSLIPLV…KTIILTNWVM (77 aa)) is the BRCT domain. The disordered stretch occupies residues 409-430 (SRGHMDEKNSSDSVTIRRDRND). Residues 465-500 (VDFKRFRKGNVTCGNSFSSLIPFAKDPYKEYDSWDV) form an involved in MRE11-binding region.

It belongs to the Nibrin family. As to quaternary structure, component of the MRN complex composed of two heterodimers RAD50 and MRE11 associated with a single NBS1.

The protein localises to the nucleus. It localises to the chromosome. Component of the MRN complex, which plays a central role in double-strand break (DSB) repair, DNA recombination, maintenance of telomere integrity and meiosis. The MRN complex is involved in the repair of DNA double-strand breaks (DSBs) via homologous recombination (HR), an error-free mechanism which primarily occurs during S and G2 phases. The complex (1) mediates the end resection of damaged DNA, which generates proper single-stranded DNA, a key initial steps in HR, and is (2) required for the recruitment of other repair factors and efficient activation of ATM and ATR upon DNA damage. The MRN complex possesses single-strand endonuclease activity and double-strand-specific 3'-5' exonuclease activity, which are provided by MRE11, to initiate end resection, which is required for single-strand invasion and recombination. Within the MRN complex, NBS1 acts as a protein-protein adapter, which specifically recognizes and binds phosphorylated proteins, promoting their recruitment to DNA damage sites. Recruits MRE11 and RAD50 components of the MRN complex to DSBs in response to DNA damage. The sequence is that of Nibrin homolog from Arabidopsis thaliana (Mouse-ear cress).